A 61-amino-acid polypeptide reads, in one-letter code: Weak toxin CM-2a (61 aa).

Intrachain disulfides connect Cys3/Cys19, Cys12/Cys37, Cys41/Cys49, and Cys50/Cys55.

This sequence belongs to the three-finger toxin family. Short-chain subfamily. Orphan group XX sub-subfamily. In terms of tissue distribution, expressed by the venom gland.

It localises to the secreted. This Naja annulifera (Banded Egyptian cobra) protein is Weak toxin CM-2a.